A 74-amino-acid chain; its full sequence is MDAVQELERRIVELEIQTALQEDVISGLNAMVAELRQTLDLQQAQLRLLYQKMQDRNPDAQEPYSLRDEIPPHY.

The disordered stretch occupies residues 54-74 (QDRNPDAQEPYSLRDEIPPHY).

This sequence belongs to the SlyX family.

The polypeptide is Protein SlyX homolog (Neisseria gonorrhoeae (strain ATCC 700825 / FA 1090)).